A 1056-amino-acid polypeptide reads, in one-letter code: ISWI chromatin-remodeling complex ATPase CHR11 (1056 aa).

A compositionally biased stretch (low complexity) spans 1–10 (MARNSNSDEA). 2 disordered regions span residues 1–80 (MARN…SKRE) and 133–175 (KSDG…GSGN). Composition is skewed to acidic residues over residues 11 to 32 (FSSE…EELE) and 60 to 73 (PVED…DEEK). A coiled-coil region spans residues 12 to 105 (SSEEEEERVK…QEMLESQNAS (94 aa)). The segment covering 141–151 (KKAKGRGRHAS) has biased composition (basic residues). Positions 155–169 (EEEEDEEYLKEEEDG) are enriched in acidic residues. Residues 201–366 (IRLYENGING…WALLNFLLPE (166 aa)) form the Helicase ATP-binding domain. 214 to 221 (DEMGLGKT) contacts ATP. The short motif at 317–320 (DEAH) is the DEAH box element. Residues 494–645 (LLDKLLPKLK…ALVIQQGRLA (152 aa)) enclose the Helicase C-terminal domain. Disordered stretches follow at residues 738-774 (WNDP…PRIP) and 814-833 (IDVE…EVEE). Residues 815–833 (DVEEPEEGGDPLTTEEVEE) are compositionally biased toward acidic residues. SANT domains are found at residues 840-892 (EGFS…ERYK) and 941-1002 (QNKG…DTLI). Positions 1011-1056 (EFDERERQARKEKKLAKSATPSKRPLGRQASESPSSTKKRKHLSMR) are disordered. The segment covering 1047–1056 (TKKRKHLSMR) has biased composition (basic residues).

It belongs to the SNF2/RAD54 helicase family. ISWI subfamily. In terms of assembly, interacts with RLT1 and RLT2. Interacts (via C-terminus) with RLT1 (via the DDT domain), RLT2 (via the DDT domain), PTM (via the DDT domain) and DDR4 (via the DDT domain). Binds to FGT1. Highly expressed in growing tissues such as inflorescence and flower meristems, young leaves and floral organs. Expressed in roots, rosette and cauline leaves, stems, flowers, inflorescences and siliques.

Its subcellular location is the nucleus. Possesses intrinsic ATP-dependent nucleosome-remodeling activity. Constitutes the catalytic subunit of several complexes capable of forming ordered nucleosome arrays on chromatin. Involved in the formation of nucleosome distribution patterns. Involved in nuclear proliferation during megagametogenesis and cell expansion in the sporophyte. Required for the maintenance of the plant vegetative phase. In association with RLT1 or RLT2 may prevent the early activation of the vegetative-to-reproductive transition by regulating key genes that contribute to flower timing, such as FT, SEP1, SEP3, AGL8/FUL, SOC1 and FLC. Necessary to acquire heat stress (HS) memory. The chain is ISWI chromatin-remodeling complex ATPase CHR11 from Arabidopsis thaliana (Mouse-ear cress).